Here is a 169-residue protein sequence, read N- to C-terminus: General odorant-binding protein 57a (169 aa).

Residues 1–20 form the signal peptide; the sequence is MFNTRLAIFLLLIVVSLSQA. 3 disulfides stabilise this stretch: cysteine 39–cysteine 77, cysteine 73–cysteine 120, and cysteine 111–cysteine 129.

This sequence belongs to the PBP/GOBP family.

Functionally, present in the aqueous fluid surrounding olfactory sensory dendrites and are thought to aid in the capture and transport of hydrophobic odorants into and through this fluid. The protein is General odorant-binding protein 57a of Drosophila melanogaster (Fruit fly).